We begin with the raw amino-acid sequence, 109 residues long: Mitochondrial pyruvate carrier 2 (109 aa).

Transmembrane regions (helical) follow at residues 19–35, 51–67, and 74–90; these read IHFW…IANI, IAVT…STII, and LFSV…YQLT.

It belongs to the mitochondrial pyruvate carrier (MPC) (TC 2.A.105) family.

It is found in the mitochondrion inner membrane. Functionally, mediates the uptake of pyruvate into mitochondria. The chain is Mitochondrial pyruvate carrier 2 from Arabidopsis thaliana (Mouse-ear cress).